Consider the following 743-residue polypeptide: MKFYSSHPMPESLAAAIAVPLLGLLPAAQAASTAVQLPSVTVEGEYSSYQPESAQSPKFTAPLADTPRTVQVIPERLIQDQGASDLEAVLRNAPGISMTAGEGGRPASDLPFIRGQNSASSLFVDGLRDPSTQSRDTFNLEQVDVVKGPDSVFSGRGGAGGSINLVTKTPRNQDFTEVQAGIGTAETYRGTIDGNWVLGENTALRLNLLGTRDTVPGRDKAVEFSRVGIAPSLRLGLSGPTRVTLGLYHYRHRRVPDYSIPYDPRTGTPITETIGVSRRNFYGLVRRDSGDTEDYAATVKWEHDLANGFKVENLARYSRATVEQITTMPELKTADLAKGLVYRNLRASYQVNDSFANRTDLRGTFDTGQWRHTFDLGGEFATSRRSRDRYKQEIPDAASPCSPVTDGNNPALCASLRDPDPHVDFPGTVRRNHNPARYHTDILSLYGFDTIAFDEQWQLNLGLRWDHYKTSGRNLPVRGAKPPVYERAARTDNLFNYQLGLVYKPRPDGSVYASYGTASTPSAVSDYAPADSISGTSQQLKPERSEAIEIGTKWQVLDRRLLVTGAMFRETRKNTSIEVAEGLRAPAGKSRVTGMELGVAGSLTPRWDVYGGYALLDSKLVRASHKSGAQGQPLPSAPRHAFSIWSTYKLLPELTVGAGAFYRSKVYGNADAGYNKDGTPKARWVPAYWRFDAMAAYQLNKHLTAQLNVYNLLDKTYYAKTYRSHYAALGPGRSAMLTFKLSY.

Positions 1 to 30 (MKFYSSHPMPESLAAAIAVPLLGLLPAAQA) are cleaved as a signal peptide. The TBDR plug domain maps to 62–168 (PLADTPRTVQ…AGGSINLVTK (107 aa)). Residues 173–743 (QDFTEVQAGI…SAMLTFKLSY (571 aa)) form the TBDR beta-barrel domain. Residues 726–743 (YAALGPGRSAMLTFKLSY) carry the TonB C-terminal box motif.

The protein belongs to the TonB-dependent receptor family.

It localises to the cell outer membrane. Probably involved in iron transport. This is Probable TonB-dependent receptor BfrD (bfrD) from Bordetella pertussis (strain Tohama I / ATCC BAA-589 / NCTC 13251).